A 159-amino-acid chain; its full sequence is Major allergen Mal d 1 (159 aa).

The protein belongs to the BetVI family.

The polypeptide is Major allergen Mal d 1 (Malus domestica (Apple)).